Consider the following 431-residue polypeptide: Glutamate-1-semialdehyde 2,1-aminomutase (431 aa).

The residue at position 266 (Lys266) is an N6-(pyridoxal phosphate)lysine.

Belongs to the class-III pyridoxal-phosphate-dependent aminotransferase family. HemL subfamily. In terms of assembly, homodimer. Requires pyridoxal 5'-phosphate as cofactor.

It is found in the cytoplasm. It carries out the reaction (S)-4-amino-5-oxopentanoate = 5-aminolevulinate. It functions in the pathway porphyrin-containing compound metabolism; protoporphyrin-IX biosynthesis; 5-aminolevulinate from L-glutamyl-tRNA(Glu): step 2/2. The sequence is that of Glutamate-1-semialdehyde 2,1-aminomutase from Wolinella succinogenes (strain ATCC 29543 / DSM 1740 / CCUG 13145 / JCM 31913 / LMG 7466 / NCTC 11488 / FDC 602W) (Vibrio succinogenes).